The sequence spans 237 residues: CD63 antigen (237 aa).

The Cytoplasmic portion of the chain corresponds to 1–11; the sequence is MAVEGGMKCVK. A helical membrane pass occupies residues 12 to 32; the sequence is FLLYVLLLVFCACAVGLIAVG. At 33–51 the chain is on the extracellular side; the sequence is VGTHLVLNQTITHGATPSF. Asn-40 carries an N-linked (GlcNAc...) asparagine glycan. The helical transmembrane segment at 52-72 threads the bilayer; that stretch reads LLPVVIIAVGAFLFLVAFVGC. Residues 73-81 are Cytoplasmic-facing; the sequence is CGACKENYC. Residues 82-102 form a helical membrane-spanning segment; sequence LMITFAIFLSLIMLVEVAAAI. Topologically, residues 103–202 are extracellular; that stretch reads AGYVFRDKVR…KIAAWLRKNV (100 aa). N-linked (GlcNAc...) asparagine glycosylation is found at Asn-130, Asn-150, and Asn-171. A helical transmembrane segment spans residues 203 to 223; sequence LVVAAAALGIAFVEILGIVLA. At 224–237 the chain is on the cytoplasmic side; it reads CCLVKSIRSGYEVM. A Lysosomal targeting motif motif is present at residues 233 to 237; sequence GYEVM.

This sequence belongs to the tetraspanin (TM4SF) family. In terms of assembly, interacts with TIMP1 and ITGB1 and recruits TIMP1 to ITGB1. Interacts with CD9. Identified in a complex with CD9 and ITGB3. Interacts with PMEL. Interacts with KDR/VEGFR2; identified in a complex with ITGB1 and KDR/VEGFR2 and is required to recruit KDR to ITGB1 complexes. Interacts with SYT7. Palmitoylated at a low, basal level in unstimulated platelets. The level of palmitoylation increases when platelets are activated by thrombin (in vitro).

It is found in the cell membrane. Its subcellular location is the lysosome membrane. The protein localises to the late endosome membrane. The protein resides in the endosome. It localises to the multivesicular body. It is found in the melanosome. Its subcellular location is the secreted. The protein localises to the extracellular exosome. The protein resides in the cell surface. In terms of biological role, functions as a cell surface receptor for TIMP1 and plays a role in the activation of cellular signaling cascades. Plays a role in the activation of ITGB1 and integrin signaling, leading to the activation of AKT, FAK/PTK2 and MAP kinases. Promotes cell survival, reorganization of the actin cytoskeleton, cell adhesion, spreading and migration, via its role in the activation of AKT and FAK/PTK2. Plays a role in VEGFA signaling via its role in regulating the internalization of KDR/VEGFR2. Plays a role in intracellular vesicular transport processes, and is required for normal trafficking of the PMEL luminal domain that is essential for the development and maturation of melanocytes. Plays a role in the adhesion of leukocytes onto endothelial cells via its role in the regulation of SELP trafficking. May play a role in mast cell degranulation in response to Ms4a2/FceRI stimulation, but not in mast cell degranulation in response to other stimuli. The chain is CD63 antigen (CD63) from Bos taurus (Bovine).